Reading from the N-terminus, the 508-residue chain is uncharacterized protein (508 aa).

Positions Lys3–Ala163 constitute a Resolvase/invertase-type recombinase catalytic domain. Ser11 functions as the O-(5'-phospho-DNA)-serine intermediate in the catalytic mechanism. The segment at residues Pro175 to Ile290 is a DNA-binding region (recombinase).

This is an uncharacterized protein from Escherichia coli (strain K12).